The following is a 595-amino-acid chain: Zinc finger protein 467 (595 aa).

Residues Met1–Glu67 form a disordered region. Residue Lys97 forms a Glycyl lysine isopeptide (Lys-Gly) (interchain with G-Cter in SUMO2) linkage. 6 C2H2-type zinc fingers span residues Tyr160–His182, Cys188–His210, Phe216–His238, Tyr244–His266, Phe272–His294, and Tyr300–His322. The disordered stretch occupies residues Gln313–Pro350. Low complexity predominate over residues Ala325–Pro343. C2H2-type zinc fingers lie at residues Phe355–His377, Phe431–His453, Phe459–His481, Phe487–His509, His515–His537, and Phe543–His565. Lys368 is covalently cross-linked (Glycyl lysine isopeptide (Lys-Gly) (interchain with G-Cter in SUMO2)).

It belongs to the krueppel C2H2-type zinc-finger protein family. As to quaternary structure, interacts with STAT3. Enhances STAT3 activity by keeping it in the nucleus.

Its subcellular location is the nucleus. Its function is as follows. Transcription factor that promotes adipocyte differentiation and suppresses osteoblast differentiation in the bone marrow. Enhances the osteoclast-supporting ability of stromal cells. Binds with STAT3 the consensus sequence 5'-CTTCTGGGAAGA-3' of the acute phase response element (APRE). Transactivates several promoters including FOS, OSM and PPARG. Recruits a histone deacetylase complex. The chain is Zinc finger protein 467 (ZNF467) from Homo sapiens (Human).